A 158-amino-acid polypeptide reads, in one-letter code: Transcriptional repressor NrdR (158 aa).

Residues 3–34 (CPSCQNTDSRVLESRAADGGRSVRRRRECLNC) fold into a zinc finger. Residues 49–139 (ITVIKRDGCR…VYRQFRGIDD (91 aa)) enclose the ATP-cone domain.

It belongs to the NrdR family. Zn(2+) serves as cofactor.

Functionally, negatively regulates transcription of bacterial ribonucleotide reductase nrd genes and operons by binding to NrdR-boxes. The sequence is that of Transcriptional repressor NrdR from Synechococcus sp. (strain CC9902).